Here is a 281-residue protein sequence, read N- to C-terminus: MKYVGAHVSASGGVENAVKNAVDIGANGFALFTKNQRQWVAKPLSEKSINKFKELMEEHGFIADGVLPHDSYLINLGHPEEDKREKSYNAFVDEIRRVEQLGLKYLNFHPGSHLKKISEEECLDLISENINRAIKDTEYATLVLETTAGQGSNLGYKFEHLAYIIDNIEDKSRIGVCIDTAHIFAAGYDIRTKEAYEKTMQEFDEIVGFKYLKGMHINDSKAKFASRVDRHHSLGKGEIGIDAFKFIMQDSRIDNIPLVLETIEPEIWADEIKLLKSFENV.

Zn(2+)-binding residues include His-69, His-109, Glu-145, Asp-179, His-182, His-216, Asp-229, His-231, and Glu-261.

It belongs to the AP endonuclease 2 family. Requires Zn(2+) as cofactor.

It carries out the reaction Endonucleolytic cleavage to 5'-phosphooligonucleotide end-products.. Its function is as follows. Endonuclease IV plays a role in DNA repair. It cleaves phosphodiester bonds at apurinic or apyrimidinic (AP) sites, generating a 3'-hydroxyl group and a 5'-terminal sugar phosphate. The chain is Probable endonuclease 4 from Nautilia profundicola (strain ATCC BAA-1463 / DSM 18972 / AmH).